The chain runs to 271 residues: Formamidopyrimidine-DNA glycosylase (271 aa).

Catalysis depends on Pro2, which acts as the Schiff-base intermediate with DNA. Residue Glu3 is the Proton donor of the active site. Catalysis depends on Lys56, which acts as the Proton donor; for beta-elimination activity. The DNA site is built by His89, Arg107, and Lys151. An FPG-type zinc finger spans residues 236–270 (NVYGRAGLPCRQCGTPVRLLRQGQRSTYFCPHCQR). Residue Arg260 is the Proton donor; for delta-elimination activity of the active site.

It belongs to the FPG family. In terms of assembly, monomer. Zn(2+) serves as cofactor.

The enzyme catalyses Hydrolysis of DNA containing ring-opened 7-methylguanine residues, releasing 2,6-diamino-4-hydroxy-5-(N-methyl)formamidopyrimidine.. The catalysed reaction is 2'-deoxyribonucleotide-(2'-deoxyribose 5'-phosphate)-2'-deoxyribonucleotide-DNA = a 3'-end 2'-deoxyribonucleotide-(2,3-dehydro-2,3-deoxyribose 5'-phosphate)-DNA + a 5'-end 5'-phospho-2'-deoxyribonucleoside-DNA + H(+). In terms of biological role, involved in base excision repair of DNA damaged by oxidation or by mutagenic agents. Acts as a DNA glycosylase that recognizes and removes damaged bases. Has a preference for oxidized purines, such as 7,8-dihydro-8-oxoguanine (8-oxoG). Has AP (apurinic/apyrimidinic) lyase activity and introduces nicks in the DNA strand. Cleaves the DNA backbone by beta-delta elimination to generate a single-strand break at the site of the removed base with both 3'- and 5'-phosphates. In Acidovorax sp. (strain JS42), this protein is Formamidopyrimidine-DNA glycosylase.